A 626-amino-acid polypeptide reads, in one-letter code: tRNA uridine 5-carboxymethylaminomethyl modification enzyme MnmG (626 aa).

Gly13–Gly18 contacts FAD. An NAD(+)-binding site is contributed by Gly273–Phe287.

Belongs to the MnmG family. Homodimer. Heterotetramer of two MnmE and two MnmG subunits. It depends on FAD as a cofactor.

The protein resides in the cytoplasm. NAD-binding protein involved in the addition of a carboxymethylaminomethyl (cmnm) group at the wobble position (U34) of certain tRNAs, forming tRNA-cmnm(5)s(2)U34. This is tRNA uridine 5-carboxymethylaminomethyl modification enzyme MnmG from Acinetobacter baylyi (strain ATCC 33305 / BD413 / ADP1).